We begin with the raw amino-acid sequence, 694 residues long: U-box domain-containing protein 1 (694 aa).

Positions 292–366 constitute a U-box domain; that stretch reads NIPDEFRCPI…HQWCYENNVK (75 aa). ARM repeat units follow at residues 392–432, 435–474, 476–516, 519–558, 560–599, 601–641, and 646–685; these read SENK…LLAK, MDNR…NLSI, DNNK…SLSM, DCKV…NLAV, NPNK…VLLG, SEGL…GLCK, and LVAM…LLNR.

As to quaternary structure, interacts with LYK3. Binds to NORK/DMI2. Phosphorylated by LYK3 in vitro. Phosphorylated by NORK/DMI2. Present ubiquitously at very low levels during nonsymbiotic growth. Accumulates in roots and nodules during symbiotic growth with rhizobia and mycorrhiza.

Its subcellular location is the cell membrane. The enzyme catalyses S-ubiquitinyl-[E2 ubiquitin-conjugating enzyme]-L-cysteine + [acceptor protein]-L-lysine = [E2 ubiquitin-conjugating enzyme]-L-cysteine + N(6)-ubiquitinyl-[acceptor protein]-L-lysine.. Its pathway is protein modification; protein ubiquitination. Exhibits U-box-dependent E3 ubiquitin ligase activity in vitro. Negatively modulates successive stages of infection and development of rhizobial (e.g. Sinorhizobium meliloti) and arbuscular mycorrhizal fungi (AM, e.g. Rhizophagus irregularis) symbioses, in an ubiquitin ligase activity-dependent manner. Negative regulator of the LYK3 signaling pathway leading to nitrogen-fixing symbiosis (e.g. infection and nodulation) by rhizobia. May be involved in the discrimination of rhizobium strains producing variant Nod factors. This chain is U-box domain-containing protein 1, found in Medicago truncatula (Barrel medic).